We begin with the raw amino-acid sequence, 60 residues long: Large ribosomal subunit protein bL32 (60 aa).

This sequence belongs to the bacterial ribosomal protein bL32 family.

The sequence is that of Large ribosomal subunit protein bL32 from Thermosipho melanesiensis (strain DSM 12029 / CIP 104789 / BI429).